The chain runs to 153 residues: MAANKERTFIMVKPDGVQRGLVGKIIERFEQKGFKLVALKFTWASKELLEKHYADLSARPFFPGLVNYMNSGPVVPMVWEGLNVVKTGRQMLGATNPADSLPGTIRGDFCIQVGRNIIHGSDAVESAEKEIALWFNEKELVTWTPAAKDWIYE.

Alanine 2 carries the N-acetylalanine modification. The ATP site is built by lysine 13, phenylalanine 61, arginine 89, threonine 95, arginine 106, and asparagine 116. The Pros-phosphohistidine intermediate role is filled by histidine 119. Serine 126 is subject to Phosphoserine.

This sequence belongs to the NDK family. As to quaternary structure, homohexamer. Mg(2+) is required as a cofactor.

The protein localises to the cytoplasm. It is found in the cytoskeleton. It carries out the reaction a 2'-deoxyribonucleoside 5'-diphosphate + ATP = a 2'-deoxyribonucleoside 5'-triphosphate + ADP. The enzyme catalyses a ribonucleoside 5'-diphosphate + ATP = a ribonucleoside 5'-triphosphate + ADP. Major role in the synthesis of nucleoside triphosphates other than ATP. The ATP gamma phosphate is transferred to the NDP beta phosphate via a ping-pong mechanism, using a phosphorylated active-site intermediate. This Drosophila melanogaster (Fruit fly) protein is Nucleoside diphosphate kinase (awd).